The chain runs to 379 residues: Succinyl-diaminopimelate desuccinylase (379 aa).

H70 is a binding site for Zn(2+). The active site involves D72. Position 103 (D103) interacts with Zn(2+). The active-site Proton acceptor is E137. Residues E138, E166, and H352 each coordinate Zn(2+).

The protein belongs to the peptidase M20A family. DapE subfamily. Homodimer. Zn(2+) serves as cofactor. Requires Co(2+) as cofactor.

The catalysed reaction is N-succinyl-(2S,6S)-2,6-diaminopimelate + H2O = (2S,6S)-2,6-diaminopimelate + succinate. The protein operates within amino-acid biosynthesis; L-lysine biosynthesis via DAP pathway; LL-2,6-diaminopimelate from (S)-tetrahydrodipicolinate (succinylase route): step 3/3. Functionally, catalyzes the hydrolysis of N-succinyl-L,L-diaminopimelic acid (SDAP), forming succinate and LL-2,6-diaminopimelate (DAP), an intermediate involved in the bacterial biosynthesis of lysine and meso-diaminopimelic acid, an essential component of bacterial cell walls. The protein is Succinyl-diaminopimelate desuccinylase of Burkholderia ambifaria (strain MC40-6).